The primary structure comprises 880 residues: Potassium transport protein 2 (880 aa).

N9 carries N-linked (GlcNAc...) asparagine glycosylation. The next 2 membrane-spanning stretches (helical) occupy residues 28–48 and 84–104; these read FVQD…LYGS and TILL…LTLF. The disordered stretch occupies residues 157-182; that stretch reads MHRPVAPETKAEEAEHQENEKHHRHH. Over residues 165–177 the composition is skewed to basic and acidic residues; the sequence is TKAEEAEHQENEK. N-linked (GlcNAc...) asparagine glycosylation is found at N239, N283, N293, N294, N321, N443, and N460. Residues 289 to 315 show a composition bias toward polar residues; sequence HHLDNNSSISSHNPSLETANDGNQETV. Residues 289–344 are disordered; that stretch reads HHLDNNSSISSHNPSLETANDGNQETVSSSNSNYSTTRVDNDPHVASYSPQNSNFD. Positions 316–325 are enriched in low complexity; sequence SSSNSNYSTT. 6 helical membrane passes run 494–514, 571–591, 625–645, 684–704, 756–776, and 787–807; these read ILVV…LIFI, LIFL…WIMI, WVLF…FMVL, IAPA…YPIA, QLSH…IVEG, and FTLF…GLSL. The tract at residues 857-880 is disordered; that stretch reads REEEDYMRRHGKKNTNRADPVPSS.

It belongs to the TrkH potassium transport family.

Its subcellular location is the cell membrane. Together with TRK1, defines the major, high-affinity potassium influx transport system. Involved in maintenance of the proper sodium/potassium ratio in the cell and in regulating the plasma membrane potential. The chain is Potassium transport protein 2 (trk2) from Schizosaccharomyces pombe (strain 972 / ATCC 24843) (Fission yeast).